Here is a 325-residue protein sequence, read N- to C-terminus: LIM and senescent cell antigen-like-containing domain protein 1 (325 aa).

Position 2 is an N-acetylalanine (A2). 5 consecutive LIM zinc-binding domains span residues 10 to 62 (CERC…CEHD), 71 to 121 (CHQC…CRPC), 135 to 184 (CQKC…CLPC), 193 to 243 (CGAC…CETH), and 252 to 303 (CFHC…CKKC).

Component of the heterotrimeric IPP (ILK-PINCH-PARVIN) complex composed of ILK, LIMS1/PINCH and PARVA; the complex binds to F-actin via the C-terminal tail of LIMS1 and the N-terminal region of PARVA, promoting F-actin filament bundling. Formation of the IPP complex is dependent on protein kinase C and precedes integrin-mediated cell adhesion and spreading. Competes with LIMS2 for interaction with ILK. Interacts (via LIM zinc-binding 5) with TGFB1I1. Interacts with SH3/SH2 adapter NCK2, thereby linking the complex to cell surface receptors. Expressed in most tissues except in the brain.

It is found in the cell junction. It localises to the focal adhesion. The protein resides in the cell membrane. Its function is as follows. Within the IPP (ILK-PINCH-PARVIN) complex, binds to F-actin, promoting F-actin bundling, a process required to generate force for actin cytoskeleton reorganization and subsequent dynamic cell adhesion events such as cell spreading and migration. This chain is LIM and senescent cell antigen-like-containing domain protein 1 (LIMS1), found in Homo sapiens (Human).